We begin with the raw amino-acid sequence, 148 residues long: Deoxyuridine 5'-triphosphate nucleotidohydrolase (148 aa).

Substrate contacts are provided by residues 67 to 69 (RSG), asparagine 80, 84 to 86 (LID), and methionine 94.

The protein belongs to the dUTPase family. Mg(2+) is required as a cofactor.

The catalysed reaction is dUTP + H2O = dUMP + diphosphate + H(+). Its pathway is pyrimidine metabolism; dUMP biosynthesis; dUMP from dCTP (dUTP route): step 2/2. Its function is as follows. This enzyme is involved in nucleotide metabolism: it produces dUMP, the immediate precursor of thymidine nucleotides and it decreases the intracellular concentration of dUTP so that uracil cannot be incorporated into DNA. In Burkholderia multivorans (strain ATCC 17616 / 249), this protein is Deoxyuridine 5'-triphosphate nucleotidohydrolase.